We begin with the raw amino-acid sequence, 225 residues long: UPF0758 protein Swoo_4561 (225 aa).

In terms of domain architecture, MPN spans 102-224; sequence ILSDPDLTRD…IVSFAERGWI (123 aa). 3 residues coordinate Zn(2+): His173, His175, and Asp186. The short motif at 173–186 is the JAMM motif element; it reads HNHPSGVAEPSHAD.

This sequence belongs to the UPF0758 family.

This chain is UPF0758 protein Swoo_4561, found in Shewanella woodyi (strain ATCC 51908 / MS32).